A 247-amino-acid polypeptide reads, in one-letter code: 3,4-dihydroxy-2-butanone 4-phosphate synthase (247 aa).

D-ribulose 5-phosphate-binding positions include 38–39, Asp43, 179–183, and Glu203; these read RE and RMGQT. A Mg(2+)-binding site is contributed by Glu39.

Belongs to the DHBP synthase family. In terms of assembly, homodimer. Requires Mg(2+) as cofactor. Mn(2+) is required as a cofactor.

The catalysed reaction is D-ribulose 5-phosphate = (2S)-2-hydroxy-3-oxobutyl phosphate + formate + H(+). Its pathway is cofactor biosynthesis; riboflavin biosynthesis; 2-hydroxy-3-oxobutyl phosphate from D-ribulose 5-phosphate: step 1/1. Functionally, catalyzes the conversion of D-ribulose 5-phosphate to formate and 3,4-dihydroxy-2-butanone 4-phosphate. The polypeptide is 3,4-dihydroxy-2-butanone 4-phosphate synthase (Methanosarcina mazei (strain ATCC BAA-159 / DSM 3647 / Goe1 / Go1 / JCM 11833 / OCM 88) (Methanosarcina frisia)).